Consider the following 187-residue polypeptide: UPF0232 protein Mb0004 (187 aa).

2 stretches are compositionally biased toward basic and acidic residues: residues 1–17 (MTGSVDRPDQNRGERLM) and 35–45 (AARARGQDAGR). Disordered regions lie at residues 1-23 (MTGSVDRPDQNRGERLMKSPGLD), 35-75 (AARA…DPQP), and 168-187 (PSWRKGPRHIAGRGPRDTYG).

The protein belongs to the UPF0232 family.

This chain is UPF0232 protein Mb0004, found in Mycobacterium bovis (strain ATCC BAA-935 / AF2122/97).